A 375-amino-acid polypeptide reads, in one-letter code: Alcohol dehydrogenase class-3 chain H (375 aa).

A1 carries the N-acetylalanine modification. Residues C46, H68, C98, C101, C104, C112, and C175 each contribute to the Zn(2+) site.

It belongs to the zinc-containing alcohol dehydrogenase family. Class-III subfamily. In terms of assembly, homodimer or heterodimer with L chain. The cofactor is Zn(2+).

It is found in the cytoplasm. It carries out the reaction a primary alcohol + NAD(+) = an aldehyde + NADH + H(+). The catalysed reaction is a secondary alcohol + NAD(+) = a ketone + NADH + H(+). The enzyme catalyses S-(hydroxymethyl)glutathione + NADP(+) = S-formylglutathione + NADPH + H(+). It catalyses the reaction S-(hydroxymethyl)glutathione + NAD(+) = S-formylglutathione + NADH + H(+). In terms of biological role, class-III ADH is remarkably ineffective in oxidizing ethanol, but it readily catalyzes the oxidation of long-chain primary alcohols and the oxidation of S-(hydroxymethyl) glutathione. The chain is Alcohol dehydrogenase class-3 chain H from Gadus morhua (Atlantic cod).